A 303-amino-acid polypeptide reads, in one-letter code: N-acetyl-D-glucosamine kinase (303 aa).

Residues 4–11 and 133–140 contribute to the ATP site; these read GFDVGGTK and GFGGGLIF. Zn(2+) contacts are provided by His-157, Cys-177, Cys-179, and Cys-184.

This sequence belongs to the ROK (NagC/XylR) family. NagK subfamily.

It catalyses the reaction N-acetyl-D-glucosamine + ATP = N-acetyl-D-glucosamine 6-phosphate + ADP + H(+). The protein operates within cell wall biogenesis; peptidoglycan recycling. Its function is as follows. Catalyzes the phosphorylation of N-acetyl-D-glucosamine (GlcNAc) derived from cell-wall degradation, yielding GlcNAc-6-P. This Aliivibrio fischeri (strain ATCC 700601 / ES114) (Vibrio fischeri) protein is N-acetyl-D-glucosamine kinase.